We begin with the raw amino-acid sequence, 423 residues long: Putative competence-damage inducible protein (423 aa).

It belongs to the CinA family.

This Streptococcus pyogenes serotype M1 protein is Putative competence-damage inducible protein.